The primary structure comprises 412 residues: UV DNA damage endonuclease (412 aa).

The protein belongs to the uve1/UvsE family.

Its function is as follows. Component in a DNA repair pathway. Removal of UV LIGHT damaged nucleotides. Recognizes pyrimidine dimers and cleave a phosphodiester bond immediately 5' to the lesion. The polypeptide is UV DNA damage endonuclease (Clostridium perfringens (strain 13 / Type A)).